We begin with the raw amino-acid sequence, 515 residues long: Zinc metalloproteinase-disintegrin BA-5A (515 aa).

An N-terminal signal peptide occupies residues 1-20 (MMQVLLVTICLAVFPYQGSS). Positions 21 to 193 (IILESGNVND…KEASQLVATS (173 aa)) are excised as a propeptide. A Peptidase M12B domain is found at 203–399 (RYIKYFIVVD…YKPDCTLIRP (197 aa)). Asparagine 263 carries N-linked (GlcNAc...) asparagine glycosylation. 11 disulfide bridges follow: cysteine 314–cysteine 394, cysteine 354–cysteine 378, cysteine 356–cysteine 361, cysteine 410–cysteine 429, cysteine 421–cysteine 439, cysteine 423–cysteine 434, cysteine 433–cysteine 456, cysteine 447–cysteine 453, cysteine 452–cysteine 478, cysteine 465–cysteine 485, and cysteine 472–cysteine 497. Residue histidine 339 participates in Zn(2+) binding. Glutamate 340 is an active-site residue. Zn(2+)-binding residues include histidine 343 and histidine 349. N-linked (GlcNAc...) asparagine glycosylation is present at asparagine 377. In terms of domain architecture, Disintegrin spans 407-493 (PPVCGNDILE…DCPIDHFHRN (87 aa)). The short motif at 471–473 (ECD) is the D/ECD-tripeptide element.

It belongs to the venom metalloproteinase (M12B) family. P-II subfamily. In terms of assembly, monomer. Zn(2+) serves as cofactor. As to expression, expressed by the venom gland.

It localises to the secreted. Its function is as follows. Snake venom zinc metalloprotease that possesses hemorrhagic activity and degrades alpha chain of fibrinogen (FGA). May inhibit alpha-2/beta-1 integrin (ITGA2/ITGB1). The protein is Zinc metalloproteinase-disintegrin BA-5A of Bitis arietans (African puff adder).